Consider the following 255-residue polypeptide: Indole-3-glycerol phosphate synthase (255 aa).

This sequence belongs to the TrpC family.

It carries out the reaction 1-(2-carboxyphenylamino)-1-deoxy-D-ribulose 5-phosphate + H(+) = (1S,2R)-1-C-(indol-3-yl)glycerol 3-phosphate + CO2 + H2O. Its pathway is amino-acid biosynthesis; L-tryptophan biosynthesis; L-tryptophan from chorismate: step 4/5. In Streptococcus sanguinis (strain SK36), this protein is Indole-3-glycerol phosphate synthase.